The sequence spans 119 residues: Holo-[acyl-carrier-protein] synthase (119 aa).

Mg(2+) is bound by residues aspartate 8 and glutamate 50.

This sequence belongs to the P-Pant transferase superfamily. AcpS family. It depends on Mg(2+) as a cofactor.

It is found in the cytoplasm. The catalysed reaction is apo-[ACP] + CoA = holo-[ACP] + adenosine 3',5'-bisphosphate + H(+). Transfers the 4'-phosphopantetheine moiety from coenzyme A to a Ser of acyl-carrier-protein. In Clavibacter michiganensis subsp. michiganensis (strain NCPPB 382), this protein is Holo-[acyl-carrier-protein] synthase.